A 480-amino-acid polypeptide reads, in one-letter code: Citrate synthase 1, peroxisomal (480 aa).

Catalysis depends on residues His-321, His-360, and Asp-416.

This sequence belongs to the citrate synthase family. Expressed only in siliques. Not expressed in flower, stem, cauline leaf, young leaf, mature leaf and senescent leaf.

The protein resides in the peroxisome. The enzyme catalyses oxaloacetate + acetyl-CoA + H2O = citrate + CoA + H(+). Its pathway is carbohydrate metabolism; tricarboxylic acid cycle; isocitrate from oxaloacetate: step 1/2. This is Citrate synthase 1, peroxisomal (CSY1) from Arabidopsis thaliana (Mouse-ear cress).